A 244-amino-acid polypeptide reads, in one-letter code: rRNA adenine N-6-methyltransferase (244 aa).

The S-adenosyl-L-methionine site is built by N11, I13, G38, E59, D84, and S101.

This sequence belongs to the class I-like SAM-binding methyltransferase superfamily. rRNA adenine N(6)-methyltransferase family.

In terms of biological role, involved in erythromycin resistance. This is rRNA adenine N-6-methyltransferase (ermG) from Lysinibacillus sphaericus (Bacillus sphaericus).